The primary structure comprises 313 residues: uncharacterized protein (313 aa).

The first 24 residues, 1–24 (MKRRRRWRGWLLFLALCFCLLCEA), serve as a signal peptide directing secretion. N-linked (GlcNAc...) asparagine; by host glycans are attached at residues N28, N43, N57, N77, N101, N102, N109, N149, N168, N215, N222, N251, N254, and N267. The segment at 47-73 (ATTGTTTTSPNVTSTTSNTVTTPTTVS) is disordered. The segment covering 90–114 (STVSGTRNTRNNNTTTIGTNATSPS) has biased composition (low complexity). The tract at residues 90 to 117 (STVSGTRNTRNNNTTTIGTNATSPSSSV) is disordered.

The protein belongs to the HHV-5 US34A protein family.

This is an uncharacterized protein from Homo sapiens (Human).